The following is a 190-amino-acid chain: Threonylcarbamoyl-AMP synthase (190 aa).

The YrdC-like domain occupies 7–190 (GDAIAAAIDV…ALTGELFRQG (184 aa)).

The protein belongs to the SUA5 family. TsaC subfamily.

Its subcellular location is the cytoplasm. It catalyses the reaction L-threonine + hydrogencarbonate + ATP = L-threonylcarbamoyladenylate + diphosphate + H2O. Its function is as follows. Required for the formation of a threonylcarbamoyl group on adenosine at position 37 (t(6)A37) in tRNAs that read codons beginning with adenine. Catalyzes the conversion of L-threonine, HCO(3)(-)/CO(2) and ATP to give threonylcarbamoyl-AMP (TC-AMP) as the acyladenylate intermediate, with the release of diphosphate. The chain is Threonylcarbamoyl-AMP synthase from Escherichia coli O1:K1 / APEC.